We begin with the raw amino-acid sequence, 309 residues long: Acetyl-coenzyme A carboxylase carboxyl transferase subunit beta (309 aa).

Residues N29–S298 form the CoA carboxyltransferase N-terminal domain. 4 residues coordinate Zn(2+): C35, C36, C52, and C55.

This sequence belongs to the AccD/PCCB family. Acetyl-CoA carboxylase is a heterohexamer composed of biotin carboxyl carrier protein (AccB), biotin carboxylase (AccC) and two subunits each of ACCase subunit alpha (AccA) and ACCase subunit beta (AccD). Zn(2+) is required as a cofactor.

The protein resides in the cytoplasm. It carries out the reaction N(6)-carboxybiotinyl-L-lysyl-[protein] + acetyl-CoA = N(6)-biotinyl-L-lysyl-[protein] + malonyl-CoA. It participates in lipid metabolism; malonyl-CoA biosynthesis; malonyl-CoA from acetyl-CoA: step 1/1. Functionally, component of the acetyl coenzyme A carboxylase (ACC) complex. Biotin carboxylase (BC) catalyzes the carboxylation of biotin on its carrier protein (BCCP) and then the CO(2) group is transferred by the transcarboxylase to acetyl-CoA to form malonyl-CoA. This chain is Acetyl-coenzyme A carboxylase carboxyl transferase subunit beta, found in Pelagibacter ubique (strain HTCC1062).